Consider the following 624-residue polypeptide: Glycosyltransferase AglD (624 aa).

Asp-201 is an active-site residue. The next 8 membrane-spanning stretches (helical) occupy residues 260–280, 285–305, 381–401, 427–447, 496–518, 532–552, 556–576, and 587–607; these read VTIV…TLYI, VISV…VIYV, LLTI…TGGL, AAYV…GIAL, VGLT…LLAL, FFAV…GGVG, IAFT…ALAA, and VTIV…TTAV.

Belongs to the glycosyltransferase 2 family.

It is found in the cell membrane. It participates in cell surface structure biogenesis; S-layer biogenesis. In terms of biological role, involved in the assembly of a N-linked pentasaccharide that decorates the S-layer glycoprotein and flagellins. Catalyzes the addition of the mannose found at position 5 of the pentasaccharide to its own distinct dolichol phosphate carrier. In Haloferax volcanii (strain ATCC 29605 / DSM 3757 / JCM 8879 / NBRC 14742 / NCIMB 2012 / VKM B-1768 / DS2) (Halobacterium volcanii), this protein is Glycosyltransferase AglD (aglD).